The following is a 273-amino-acid chain: Zinc finger protein 32 (273 aa).

3 C2H2-type zinc fingers span residues 77 to 99 (YECQ…ERIH), 105 to 127 (FECT…QRIH), and 133 to 155 (YQCK…ERLH). Zn(2+) is bound by residues cysteine 79, cysteine 82, histidine 95, histidine 99, cysteine 107, cysteine 110, histidine 123, histidine 127, serine 141, glutamine 144, glycine 157, tyrosine 161, phenylalanine 198, lysine 201, leucine 214, alanine 218, cysteine 247, cysteine 250, histidine 263, and cysteine 267. 2 C2H2-type zinc fingers span residues 161 to 183 (YECA…RRVH) and 189 to 211 (YRCD…IRVH). A C2H2-type 6 zinc finger spans residues 217 to 239 (YACTQCRKSFHTRGNCILHGKIH). The segment at 245–267 (YLCGQCGKSFTQRGSLAVHQRSC) adopts a CCHC-type zinc-finger fold.

Belongs to the krueppel C2H2-type zinc-finger protein family.

The protein resides in the nucleus. In terms of biological role, may be involved in transcriptional regulation. This Homo sapiens (Human) protein is Zinc finger protein 32 (ZNF32).